The primary structure comprises 387 residues: Lipid-A-disaccharide synthase (387 aa).

It belongs to the LpxB family.

The catalysed reaction is a lipid X + a UDP-2-N,3-O-bis[(3R)-3-hydroxyacyl]-alpha-D-glucosamine = a lipid A disaccharide + UDP + H(+). Its pathway is bacterial outer membrane biogenesis; LPS lipid A biosynthesis. Condensation of UDP-2,3-diacylglucosamine and 2,3-diacylglucosamine-1-phosphate to form lipid A disaccharide, a precursor of lipid A, a phosphorylated glycolipid that anchors the lipopolysaccharide to the outer membrane of the cell. The polypeptide is Lipid-A-disaccharide synthase (Nitrosococcus oceani (strain ATCC 19707 / BCRC 17464 / JCM 30415 / NCIMB 11848 / C-107)).